Consider the following 627-residue polypeptide: Ras and EF-hand domain-containing protein homolog (627 aa).

Residues 55–245 (YERVIRNFLR…RKLHDSNDGL (191 aa)) adopt a coiled-coil conformation. Phosphoserine is present on residues Ser-266 and Ser-272. GTP is bound by residues 438–443 (AVGKSS), 541–544 (NKAD), and 578–579 (AK).

It belongs to the small GTPase superfamily. Rab family. In terms of assembly, homodimer. Interacts with the dynein-dynactin complex.

The protein localises to the cytoplasm. It localises to the perinuclear region. In terms of biological role, binds predominantly GDP, and also GTP. Acts as a dynein adapter protein that activates dynein-mediated transport and dynein-dynactin motility on microtubules. In Mus musculus (Mouse), this protein is Ras and EF-hand domain-containing protein homolog (Rasef).